The sequence spans 103 residues: Large ribosomal subunit protein bL21 (103 aa).

The protein belongs to the bacterial ribosomal protein bL21 family. Part of the 50S ribosomal subunit. Contacts protein L20.

This protein binds to 23S rRNA in the presence of protein L20. This Ralstonia pickettii (strain 12J) protein is Large ribosomal subunit protein bL21.